A 292-amino-acid chain; its full sequence is 32 kDa protein (292 aa).

In terms of biological role, may be involved in transmission by vector nematode species. This Bidens pilosa (Hairy beggarticks) protein is 32 kDa protein.